We begin with the raw amino-acid sequence, 1116 residues long: Minor outer capsid protein P2 (1116 aa).

One can recognise a PPPDE domain in the interval 929 to 1116 (ENNAANFFER…IGSNCSKLCA (188 aa)). Residues His-953 and Cys-1111 contribute to the active site.

Belongs to the phytoreovirus minor outer capsid protein P2 family. In terms of assembly, interacts with host ent-kaurene oxidases OSKO1, OSKO2, OSKOL4 and OSKOL5; this interaction.

It is found in the virion. Its subcellular location is the host cytoplasm. Minor capsid protein present in the outer capsid, which is required for adsorption of the virus onto host insect cells (Potential). Could play a role in the host plant virus induced dwarfism. The polypeptide is Minor outer capsid protein P2 (Rice dwarf virus (isolate Fujian) (RDV)).